The primary structure comprises 399 residues: MSKGRLFTSESVTEGHPDKICDAISDSVLDALLEQDPKSRVAVETLVTTGQVHVAGEVTTTAYADIPKIVRDRILDIGYDSSTKGFDGASCGVNVAIGAQSPDIAQGVDTAHETRVEGKADPLDLQGAGDQGLMFGYAIGDTPELMPLPIALAHRLARRLTEVRKNGVLDYLRPDGKTQVTIQYDGTTPVRLDTVVLSTQHADGIDLEGTLTPDIREKVVNTVLADLGHETLDTSDYRLLVNPTGKFVLGGPMGDAGLTGRKIIVDTYGGWARHGGGAFSGKDPSKVDRSAAYAMRWVAKNVVAAGLAERVEVQVAYAIGKAAPVGLFVETFGSETVDPAKIEKAIGEVFDLRPAAIVRDLDLLRPIYAPTAAYGHFGRTDIELPWEQTNKVDDLKSAI.

Residue H16 coordinates ATP. D18 provides a ligand contact to Mg(2+). E44 lines the K(+) pocket. E57 and Q100 together coordinate L-methionine. Residues 100–110 are flexible loop; that stretch reads QSPDIAQGVDT. ATP contacts are provided by residues 175–177, 246–247, D255, 261–262, A278, and K282; these read DGK, KF, and RK. D255 serves as a coordination point for L-methionine. K286 is a binding site for L-methionine. K341 is covalently cross-linked (Isoglutamyl lysine isopeptide (Lys-Gln) (interchain with Q-Cter in protein Pup)).

The protein belongs to the AdoMet synthase family. Homotetramer; dimer of dimers. Mg(2+) is required as a cofactor. Requires K(+) as cofactor.

The protein resides in the cytoplasm. It catalyses the reaction L-methionine + ATP + H2O = S-adenosyl-L-methionine + phosphate + diphosphate. It participates in amino-acid biosynthesis; S-adenosyl-L-methionine biosynthesis; S-adenosyl-L-methionine from L-methionine: step 1/1. Its function is as follows. Catalyzes the formation of S-adenosylmethionine (AdoMet) from methionine and ATP. The overall synthetic reaction is composed of two sequential steps, AdoMet formation and the subsequent tripolyphosphate hydrolysis which occurs prior to release of AdoMet from the enzyme. This Mycolicibacterium smegmatis (strain ATCC 700084 / mc(2)155) (Mycobacterium smegmatis) protein is S-adenosylmethionine synthase.